Reading from the N-terminus, the 519-residue chain is DNA-directed RNA polymerase subunit Rpo2N (519 aa).

This sequence belongs to the RNA polymerase beta chain family. As to quaternary structure, part of the RNA polymerase complex.

It is found in the cytoplasm. It catalyses the reaction RNA(n) + a ribonucleoside 5'-triphosphate = RNA(n+1) + diphosphate. Functionally, DNA-dependent RNA polymerase (RNAP) catalyzes the transcription of DNA into RNA using the four ribonucleoside triphosphates as substrates. The Rpo2 subunit (Rpo2N and Rpo2C in this organism) is implicated in DNA promoter recognition and in nucleotide binding. This is DNA-directed RNA polymerase subunit Rpo2N from Methanothermobacter thermautotrophicus (strain ATCC 29096 / DSM 1053 / JCM 10044 / NBRC 100330 / Delta H) (Methanobacterium thermoautotrophicum).